The primary structure comprises 965 residues: Phosphoenolpyruvate carboxylase 1 (965 aa).

Ser-11 bears the Phosphoserine mark. His-172 is an active-site residue. Residues Trp-283, Arg-450, and Asp-597 each coordinate D-glucose 6-phosphate. Lys-600 is an active-site residue. Residue Arg-635 coordinates D-glucose 6-phosphate. Arg-641 is a catalytic residue. An L-aspartate-binding site is contributed by Arg-641. A D-glucose 6-phosphate-binding site is contributed by Thr-665. Gln-673 contacts L-aspartate. D-glucose 6-phosphate contacts are provided by residues Arg-753 and Arg-767–Ile-769. Residues Lys-829, Arg-888, and Asn-963 each coordinate L-aspartate.

This sequence belongs to the PEPCase type 1 family. As to quaternary structure, homotetramer. It depends on Mg(2+) as a cofactor. As to expression, expressed in roots and stems and at low levels in leaves. Preferentially expressed in the phloem and in root tips.

The protein localises to the cytoplasm. The catalysed reaction is oxaloacetate + phosphate = phosphoenolpyruvate + hydrogencarbonate. With respect to regulation, activated by the allosteric regulator glucose-6-phosphate. Inhibited by malate and aspartate. Up regulated by light-reversible phosphorylation. Through the carboxylation of phosphoenolpyruvate (PEP) it forms oxaloacetate, a four-carbon dicarboxylic acid source for the tricarboxylic acid cycle. May be involved in phloem loading with sucrose and in anions and cations uptake and amino acid biosynthesis in roots. The polypeptide is Phosphoenolpyruvate carboxylase 1 (Flaveria trinervia (Clustered yellowtops)).